A 368-amino-acid chain; its full sequence is Multifunctional CCA protein (368 aa).

ATP is bound by residues G8 and R11. Positions 8 and 11 each coordinate CTP. Residues D21 and D23 each coordinate Mg(2+). Positions 91, 137, and 140 each coordinate ATP. Positions 91, 137, and 140 each coordinate CTP.

This sequence belongs to the tRNA nucleotidyltransferase/poly(A) polymerase family. Bacterial CCA-adding enzyme type 1 subfamily. In terms of assembly, monomer. Can also form homodimers and oligomers. The cofactor is Mg(2+). Requires Ni(2+) as cofactor.

It catalyses the reaction a tRNA precursor + 2 CTP + ATP = a tRNA with a 3' CCA end + 3 diphosphate. The catalysed reaction is a tRNA with a 3' CCA end + 2 CTP + ATP = a tRNA with a 3' CCACCA end + 3 diphosphate. Catalyzes the addition and repair of the essential 3'-terminal CCA sequence in tRNAs without using a nucleic acid template. Adds these three nucleotides in the order of C, C, and A to the tRNA nucleotide-73, using CTP and ATP as substrates and producing inorganic pyrophosphate. tRNA 3'-terminal CCA addition is required both for tRNA processing and repair. Also involved in tRNA surveillance by mediating tandem CCA addition to generate a CCACCA at the 3' terminus of unstable tRNAs. While stable tRNAs receive only 3'-terminal CCA, unstable tRNAs are marked with CCACCA and rapidly degraded. The protein is Multifunctional CCA protein of Pseudomonas putida (strain ATCC 47054 / DSM 6125 / CFBP 8728 / NCIMB 11950 / KT2440).